The sequence spans 353 residues: O-antigen chain mannosyltransferase RfbU (353 aa).

Belongs to the glycosyltransferase group 1 family. Glycosyltransferase 4 subfamily.

The catalysed reaction is alpha-L-rhamnosyl-(1-&gt;3)-alpha-D-galactosyl-1-diphospho-di-trans,octa-cis-undecaprenol + GDP-alpha-D-mannose = alpha-D-Man-(1-&gt;4)-alpha-L-Rha-(1-&gt;3)-alpha-D-Gal-di-trans,octa-cis-undecaprenyl diphosphate + GDP + H(+). It functions in the pathway bacterial outer membrane biogenesis; LPS O-antigen biosynthesis. Its function is as follows. Mannosyltransferase involved in the biosynthesis of the repeat unit of the lipopolysaccharide (LPS) O-antigen region. Catalyzes the addition of a mannose to the rhamnosyl-galactosyl-undecaprenyl diphosphate intermediate. The polypeptide is O-antigen chain mannosyltransferase RfbU (Salmonella typhimurium (strain LT2 / SGSC1412 / ATCC 700720)).